A 241-amino-acid polypeptide reads, in one-letter code: tRNA pseudouridine synthase A (241 aa).

Asp53 serves as the catalytic Nucleophile. Tyr110 serves as a coordination point for substrate.

Belongs to the tRNA pseudouridine synthase TruA family. In terms of assembly, homodimer.

The catalysed reaction is uridine(38/39/40) in tRNA = pseudouridine(38/39/40) in tRNA. In terms of biological role, formation of pseudouridine at positions 38, 39 and 40 in the anticodon stem and loop of transfer RNAs. The chain is tRNA pseudouridine synthase A from Malacoplasma penetrans (strain HF-2) (Mycoplasma penetrans).